The following is a 242-amino-acid chain: Platinum sensitivity protein 3 (242 aa).

Component of the SHU complex composed of at least CSM2, PSY3, SHU1 and SHU2.

It is found in the nucleus. Its function is as follows. Required for resistance to the DNA-damaging agents methyl methanesulfonate (MMS), cisplatin and oxaliplatin, but not to mitomycin C. Plays a role in protection against mutation accumulation. May be a component of the recombination-repair pathway. This chain is Platinum sensitivity protein 3 (PSY3), found in Saccharomyces cerevisiae (strain ATCC 204508 / S288c) (Baker's yeast).